The sequence spans 408 residues: Collagen and calcium-binding EGF domain-containing protein 1 (408 aa).

Residues 1–35 (MVPPPLPSRGGAAKRQLGKSLGPLLLLLALGHTWT) form the signal peptide. Positions 135-176 (DIDECATSNTTLCAHICINTMGSYHCECREGYILEDDGRTCT) constitute an EGF-like; calcium-binding domain. 3 disulfides stabilise this stretch: C139/C151, C147/C160, and C162/C175. N143 is a glycosylation site (N-linked (GlcNAc...) asparagine). Residue N183 is glycosylated (N-linked (GlcNAc...) asparagine). Disordered stretches follow at residues 246-335 (YLPG…GPPG) and 361-408 (HRTH…NFYP). Collagen-like domains are found at residues 247-292 (LPGP…PMGP) and 302-335 (GRRG…GPPG). The segment covering 272 to 281 (PGMPGPPGQP) has biased composition (pro residues). The span at 283-294 (PRGSMGPMGPSP) shows a compositional bias: low complexity. A compositionally biased stretch (pro residues) spans 325 to 334 (PGPPGSPGPP). S387 is a glycosylation site (O-linked (Xyl...) (chondroitin sulfate) serine). Basic and acidic residues predominate over residues 390 to 402 (DYSRRTEARDPEA).

Belongs to the CCBE1 family.

It is found in the secreted. In terms of biological role, required for lymphangioblast budding and angiogenic sprouting from venous endothelium during embryogenesis. The sequence is that of Collagen and calcium-binding EGF domain-containing protein 1 (Ccbe1) from Mus musculus (Mouse).